Reading from the N-terminus, the 28-residue chain is Humanin-like 4 (28 aa).

The protein belongs to the humanin family. In terms of tissue distribution, highly expressed in testis. Also expressed in kidney, heart, skeletal muscles and brain.

The protein resides in the secreted. It is found in the cytoplasm. In terms of biological role, plays a role as a neuroprotective and antiapoptotic factor. In Homo sapiens (Human), this protein is Humanin-like 4.